The following is a 641-amino-acid chain: Bifunctional protein glk (641 aa).

Residues 1-340 (MSTGAQTKAA…QLSNRTGGAS (340 aa)) are glucokinase. 23-28 (ADVGGT) serves as a coordination point for ATP. Positions 341 to 417 (SAVFERIRQM…LKLATGLTGT (77 aa)) constitute an HTH rpiR-type domain. A putative HTH-type transcriptional regulator region spans residues 341 to 641 (SAVFERIRQM…SHGAAPAAKD (301 aa)). The segment at residues 377 to 396 (IVNIARKADVSQPTVIRFCR) is a DNA-binding region (H-T-H motif). Positions 461–600 (AIDILNNARR…AVGVAIRRAA (140 aa)) constitute an SIS domain. A helical transmembrane segment spans residues 576 to 596 (SMISRILHLVMIDILAVGVAI).

This sequence in the N-terminal section; belongs to the bacterial glucokinase family.

The protein resides in the membrane. It carries out the reaction D-glucose + ATP = D-glucose 6-phosphate + ADP + H(+). The polypeptide is Bifunctional protein glk (glk) (Burkholderia mallei (strain ATCC 23344)).